The primary structure comprises 711 residues: Methionine--tRNA ligase (711 aa).

A 'HIGH' region motif is present at residues 15-25 (PYTNGPIHIGH). Residues Cys-147, Cys-150, Cys-160, and Cys-163 each coordinate Zn(2+). The 'KMSKS' region signature appears at 336-340 (KLSTS). Thr-339 lines the ATP pocket. A tRNA-binding domain is found at 610–711 (DFAKMDIRIG…ADAPNGATVN (102 aa)).

It belongs to the class-I aminoacyl-tRNA synthetase family. MetG type 1 subfamily. As to quaternary structure, homodimer. Requires Zn(2+) as cofactor.

Its subcellular location is the cytoplasm. It carries out the reaction tRNA(Met) + L-methionine + ATP = L-methionyl-tRNA(Met) + AMP + diphosphate. Is required not only for elongation of protein synthesis but also for the initiation of all mRNA translation through initiator tRNA(fMet) aminoacylation. The polypeptide is Methionine--tRNA ligase (Flavobacterium johnsoniae (strain ATCC 17061 / DSM 2064 / JCM 8514 / BCRC 14874 / CCUG 350202 / NBRC 14942 / NCIMB 11054 / UW101) (Cytophaga johnsonae)).